The following is a 203-amino-acid chain: Mediator of RNA polymerase II transcription subunit 22 (203 aa).

Positions 93–123 (SVNEAINQRNQQLRSLQEECDKKLIALRDEI) form a coiled coil. A compositionally biased stretch (polar residues) spans 164-188 (ESLSMPLTTATAEQSIATSQSSTPS). Positions 164–203 (ESLSMPLTTATAEQSIATSQSSTPSHPHVNGHGAGPTDHS) are disordered.

It belongs to the Mediator complex subunit 22 family. In terms of assembly, component of the Mediator complex.

It localises to the nucleus. Component of the Mediator complex, a coactivator involved in the regulated transcription of nearly all RNA polymerase II-dependent genes. Mediator functions as a bridge to convey information from gene-specific regulatory proteins to the basal RNA polymerase II transcription machinery. Mediator is recruited to promoters by direct interactions with regulatory proteins and serves as a scaffold for the assembly of a functional preinitiation complex with RNA polymerase II and the general transcription factors. This Gallus gallus (Chicken) protein is Mediator of RNA polymerase II transcription subunit 22 (MED22).